Reading from the N-terminus, the 264-residue chain is Flagellar brake protein YcgR 1 (264 aa).

In terms of domain architecture, PilZ spans 132–249; that stretch reads QRREFFRLES…RLAMIERYIA (118 aa).

Belongs to the YcgR family. In terms of assembly, monomer. Interacts with the flagellar basal bodies.

Its subcellular location is the bacterial flagellum basal body. Acts as a flagellar brake, regulating swimming and swarming in a bis-(3'-5') cyclic diguanylic acid (c-di-GMP)-dependent manner. Binds 1 c-di-GMP dimer per subunit. Increasing levels of c-di-GMP lead to decreased motility. The sequence is that of Flagellar brake protein YcgR 1 from Dechloromonas aromatica (strain RCB).